The sequence spans 120 residues: Putative non-specific lipid-transfer protein 14 (120 aa).

Residues 1–22 (MTRSFSPVVSLFLLLLQTICSA) form the signal peptide. Disulfide bonds link Cys-30/Cys-80, Cys-40/Cys-57, Cys-58/Cys-102, and Cys-78/Cys-116.

It belongs to the plant LTP family.

Plant non-specific lipid-transfer proteins transfer phospholipids as well as galactolipids across membranes. May play a role in wax or cutin deposition in the cell walls of expanding epidermal cells and certain secretory tissues. The polypeptide is Putative non-specific lipid-transfer protein 14 (LTP14) (Arabidopsis thaliana (Mouse-ear cress)).